Consider the following 464-residue polypeptide: UDP-N-acetylmuramate--L-alanine ligase (464 aa).

Residue 117 to 123 (GTHGKTT) participates in ATP binding.

Belongs to the MurCDEF family.

It localises to the cytoplasm. The catalysed reaction is UDP-N-acetyl-alpha-D-muramate + L-alanine + ATP = UDP-N-acetyl-alpha-D-muramoyl-L-alanine + ADP + phosphate + H(+). It functions in the pathway cell wall biogenesis; peptidoglycan biosynthesis. Its function is as follows. Cell wall formation. The sequence is that of UDP-N-acetylmuramate--L-alanine ligase from Streptomyces avermitilis (strain ATCC 31267 / DSM 46492 / JCM 5070 / NBRC 14893 / NCIMB 12804 / NRRL 8165 / MA-4680).